We begin with the raw amino-acid sequence, 540 residues long: Chaperonin GroEL (540 aa).

ATP is bound by residues 30 to 33 (TLGP), K51, 87 to 91 (DGTTT), G415, and D495.

It belongs to the chaperonin (HSP60) family. Forms a cylinder of 14 subunits composed of two heptameric rings stacked back-to-back. Interacts with the co-chaperonin GroES.

It is found in the cytoplasm. It catalyses the reaction ATP + H2O + a folded polypeptide = ADP + phosphate + an unfolded polypeptide.. Functionally, together with its co-chaperonin GroES, plays an essential role in assisting protein folding. The GroEL-GroES system forms a nano-cage that allows encapsulation of the non-native substrate proteins and provides a physical environment optimized to promote and accelerate protein folding. The sequence is that of Chaperonin GroEL from Serratia marcescens.